Here is a 492-residue protein sequence, read N- to C-terminus: 2,3-bisphosphoglycerate-independent phosphoglycerate mutase (492 aa).

Residues Asp-11 and Ser-61 each contribute to the Mn(2+) site. Catalysis depends on Ser-61, which acts as the Phosphoserine intermediate. Residues His-118, 147–148 (RD), Arg-177, Arg-183, 248–251 (RNDR), and Lys-321 contribute to the substrate site. Positions 387, 391, 428, 429, and 446 each coordinate Mn(2+).

It belongs to the BPG-independent phosphoglycerate mutase family. As to quaternary structure, monomer. Mn(2+) serves as cofactor.

It carries out the reaction (2R)-2-phosphoglycerate = (2R)-3-phosphoglycerate. The protein operates within carbohydrate degradation; glycolysis; pyruvate from D-glyceraldehyde 3-phosphate: step 3/5. Its function is as follows. Catalyzes the interconversion of 2-phosphoglycerate and 3-phosphoglycerate. The protein is 2,3-bisphosphoglycerate-independent phosphoglycerate mutase of Helicobacter acinonychis (strain Sheeba).